We begin with the raw amino-acid sequence, 108 residues long: Small ribosomal subunit protein uS17 (108 aa).

It belongs to the universal ribosomal protein uS17 family. As to quaternary structure, part of the 30S ribosomal subunit.

Its function is as follows. One of the primary rRNA binding proteins, it binds specifically to the 5'-end of 16S ribosomal RNA. This chain is Small ribosomal subunit protein uS17, found in Methanoregula boonei (strain DSM 21154 / JCM 14090 / 6A8).